The chain runs to 407 residues: Tryptophan synthase beta chain (407 aa).

An N6-(pyridoxal phosphate)lysine modification is found at Lys-91.

This sequence belongs to the TrpB family. Tetramer of two alpha and two beta chains. It depends on pyridoxal 5'-phosphate as a cofactor.

It carries out the reaction (1S,2R)-1-C-(indol-3-yl)glycerol 3-phosphate + L-serine = D-glyceraldehyde 3-phosphate + L-tryptophan + H2O. It functions in the pathway amino-acid biosynthesis; L-tryptophan biosynthesis; L-tryptophan from chorismate: step 5/5. Functionally, the beta subunit is responsible for the synthesis of L-tryptophan from indole and L-serine. The chain is Tryptophan synthase beta chain from Streptococcus pneumoniae (strain Taiwan19F-14).